Consider the following 1101-residue polypeptide: Error-prone DNA polymerase (1101 aa).

Residues 1055-1101 (ADLGHPMDSAVGQTTPQTDSAPRPRPQPRAMHPREQAKRLFPSRDFH) form a disordered region. The segment covering 1065–1074 (VGQTTPQTDS) has biased composition (polar residues). A compositionally biased stretch (basic and acidic residues) spans 1086 to 1101 (HPREQAKRLFPSRDFH).

Belongs to the DNA polymerase type-C family. DnaE2 subfamily.

The protein resides in the cytoplasm. It catalyses the reaction DNA(n) + a 2'-deoxyribonucleoside 5'-triphosphate = DNA(n+1) + diphosphate. In terms of biological role, DNA polymerase involved in damage-induced mutagenesis and translesion synthesis (TLS). It is not the major replicative DNA polymerase. This is Error-prone DNA polymerase from Ruegeria pomeroyi (strain ATCC 700808 / DSM 15171 / DSS-3) (Silicibacter pomeroyi).